Here is a 159-residue protein sequence, read N- to C-terminus: Protransforming growth factor alpha (159 aa).

An N-terminal signal peptide occupies residues 1–23; sequence MVPATGQLALLALGILLAVCQAL. A propeptide spans 24-38 (removed in mature form); that stretch reads ENSTSPLSDSPVAAA. The Extracellular segment spans residues 24–97; the sequence is ENSTSPLSDS…AVVAASQKKQ (74 aa). N25 carries N-linked (GlcNAc...) asparagine glycosylation. Residues 44-83 enclose the EGF-like domain; sequence NKCPDSHTQYCFHGTCRFLVQEEKPACVCHSGYVGVRCEH. 3 cysteine pairs are disulfide-bonded: C46/C59, C54/C70, and C72/C81. Residues 89 to 159 constitute a propeptide, removed in mature form; that stretch reads VVAASQKKQA…TACCHSETVV (71 aa). The helical transmembrane segment at 98-123 threads the bilayer; the sequence is AITALVVVSIVALAVLIITCVLIHCC. Residues 124–159 lie on the Cytoplasmic side of the membrane; it reads QLRKHCEWCRALVCRHEKPSALLKGRTACCHSETVV. 2 S-palmitoyl cysteine lipidation sites follow: C152 and C153.

In terms of assembly, interacts with the PDZ domains of SDCBP and SNTA1. The interaction with SDCBP, is required for the targeting to the cell surface. In the endoplasmic reticulum, in its immature form (i.e. with a prosegment and lacking full N-glycosylation), interacts with CNIH. In the Golgi apparatus, may form a complex with CNIH and GORASP2. Interacts (via cytoplasmic C-terminal domain) with NKD2. Interacts with MAGI3.

The protein localises to the secreted. It localises to the extracellular space. Its subcellular location is the cell membrane. TGF alpha is a mitogenic polypeptide that is able to bind to the EGF receptor/EGFR and to act synergistically with TGF beta to promote anchorage-independent cell proliferation in soft agar. The sequence is that of Protransforming growth factor alpha (Tgfa) from Mus musculus (Mouse).